The chain runs to 1465 residues: MSDLFAKLMDQIEMPLDMRRSSAFSSADIIEVKVHSVSRLWEFHFAFAAVLPIATYRELHDRLIRTFEAADIKVTFDIQAAQVDYSDDLLQAYYQEAFEHAPCNSASFKSSFSKLKVTYEDDKLIIAAPGFVNNDHFRNNHLPNLVKQLEAFGFGTLTIDMVSDQEMTEHLTKNFVSSRQALVKKAVQDNLEAQKSLEAMMPPVEEATPAPKFDYKERAAKRQAGFEKATITPMIEIETEENRIVFEGMVFDVERKTTRTGRHIINFKMTDYTSSFALQKWAKDDEELRKFDMIAKGVWLRVQGNIETNPFTKSLTMNVQQVKEIVHHERKDLMPEGQKRVELHAHTNMSTMDALLTVESLIDTAAKWGHKAVAITDHANVQSFPHGYHRARKAGIKAIFGLEANIVEDKVPISYDPVDMDLHEATYVVFDVETTGLSAMNNDLIQIAASKMFKGNIVEQFDEFIDPGHPLSAFTTELTGITDKHLQGAKPLVTVLKAFQDFCKDSILVAHNASFDVGFMNANYERHDLPKITQPVIDTLEFARNLYPEYKRHGLGPLTKRFQVSLDHHHMANYDAEATGRLLFIFLKDAREKHGIKNLLQLNTDLVAEDSYKKARIKHATIYVQNQVGLKNMFKLVSLSNIKYFEGVPRIPRTVLDAHREGLLLGTACSDGEVFDAVLTKGIDAAVDLAKYYDFIEIMPPAIYQPLVVRELIKDQAGIEQVIRDLIEVGKRAKKPVLATGNVHYLEPEEEIYREIIVRSLGQGAMINRTIGRGEGAQPAPLPKAHFRTTNEMLDEFAFLGKDLAYQVVVENTQDFADRIEEVEVVKGDLYTPYIDKAEETVAELTYQKAFEIYGNPLPDIIDLRIEKELTSILGNGFAVIYLASQMLVNRSNERGYLVGSRGSVGSSFVATMIGITEVNPMPPHYVCPSCQHSEFITDGSVGSGYDLPNKACPKCGTPYQKDGQDIPFETFLGFDGDKVPDIDLNFSGDDQPSAHLDVRDIFGAEYAFRAGTVGTVAEKTAYGFVKGYERDYGKFYRDAEVDRLAAGAAGVKRTTGQHPGGIVVIPNYMDVYDFTPVQYPADDVTASWQTTHFNFHDIDENVLKLDILGHDDPTMIRKLQDLSGIDPITIPADDPGVMALFSGTEVLGVTPEQIGTPTGMLGIPEFGTNFVRGMVNETHPTTFAELLQLSGLSHGTDVWLGNAQDLIKEGIATLKTVIGCRDDIMVYLMHAGLEPKMAFTIMERVRKGLWLKISEEERNGYIDAMRENNVPDWYIESCGKIKYMFPKAHAAAYVLMALRVAYFKVHHPIMYYCAYFSIRAKAFELKTMSGGLDAVKARMEDITIKRKNNEATNVENDLFTTLEIVNEMLERGFKFGKLDLYKSDAIEFQIKGDTLIPPFIALEGLGENVAKQIVKARQEGEFLSKMELRKRGGASSTLVEKMDEMGILGNMPEDNQLSLFDDFF.

The 157-residue stretch at 427–583 (YVVFDVETTG…YDAEATGRLL (157 aa)) folds into the Exonuclease domain.

The protein belongs to the DNA polymerase type-C family. PolC subfamily.

The protein localises to the cytoplasm. It catalyses the reaction DNA(n) + a 2'-deoxyribonucleoside 5'-triphosphate = DNA(n+1) + diphosphate. Functionally, required for replicative DNA synthesis. This DNA polymerase also exhibits 3' to 5' exonuclease activity. The sequence is that of DNA polymerase III polC-type from Streptococcus pyogenes serotype M3 (strain ATCC BAA-595 / MGAS315).